We begin with the raw amino-acid sequence, 230 residues long: 2-amino-5-formylamino-6-ribosylaminopyrimidin-4(3H)-one 5'-monophosphate deformylase (230 aa).

4 residues coordinate Fe cation: E29, H31, D40, and H109.

It belongs to the creatininase superfamily. FAPy deformylase family. As to quaternary structure, homodimer. Fe(2+) serves as cofactor. Requires Zn(2+) as cofactor.

It carries out the reaction 2-amino-5-formylamino-6-(5-phospho-D-ribosylamino)pyrimidin-4(3H)-one + H2O = 2,5-diamino-6-(1-D-ribosylamino)pyrimidin-4(3H)-one 5'-phosphate + formate + H(+). The protein operates within cofactor biosynthesis; coenzyme F420 biosynthesis. It participates in cofactor biosynthesis; riboflavin biosynthesis. Its function is as follows. Catalyzes the hydrolysis of the formamide of 2-amino-5-formylamino-6-ribosylamino-4(3H)-pyrimidinone 5'-monophosphate (FAPy) to form 2,5-diamino-6-ribosylamino-4(3H)-pyrimidinone 5'-phosphate (APy). The chain is 2-amino-5-formylamino-6-ribosylaminopyrimidin-4(3H)-one 5'-monophosphate deformylase from Methanobrevibacter smithii (strain ATCC 35061 / DSM 861 / OCM 144 / PS).